The chain runs to 1485 residues: DNA topoisomerase 2 (1485 aa).

The span at 1–16 shows a compositional bias: acidic residues; that stretch reads MSIDADFSDYEDEASG. The interval 1 to 76 is disordered; sequence MSIDADFSDY…NGNGNSNVST (76 aa). A compositionally biased stretch (polar residues) spans 46 to 59; the sequence is DLRQTSLTSMTASE. The span at 64–76 shows a compositional bias: low complexity; sequence VTNNGNGNSNVST. ATP-binding positions include asparagine 136, asparagine 165, 193-195, and 206-213; these read SSN and GRNGYGAK. The tract at residues 388–392 is interaction with DNA; it reads KKENK. 421–423 is a binding site for ATP; it reads QTK. In terms of domain architecture, Toprim spans 499 to 613; the sequence is CVLILTEGDS…SLLQIPGFLI (115 aa). Mg(2+)-binding residues include glutamate 505, aspartate 582, and aspartate 584. The Topo IIA-type catalytic domain maps to 745 to 1195; the sequence is IPSVVDGLKP…TPKELWLHDL (451 aa). The O-(5'-phospho-DNA)-tyrosine intermediate role is filled by tyrosine 835. Positions 1019–1028 are interaction with DNA; that stretch reads KLSRTQATSN. Residues 1216 to 1225 are compositionally biased toward basic and acidic residues; that stretch reads EEQSSRDFVN. Residues 1216–1485 form a disordered region; the sequence is EEQSSRDFVN…EDVDDYDESD (270 aa). Residues 1226–1242 show a composition bias toward basic residues; the sequence is RTKKKPRGKSTGTRKPR. The segment covering 1260 to 1273 has biased composition (polar residues); that stretch reads ESKPSTTNRKQQTL. Basic and acidic residues predominate over residues 1278–1307; the sequence is ASKEPEKSSDINIVKTEDNSHGLSVEENRI. Serine 1310 and serine 1345 each carry phosphoserine. Residues 1387 to 1396 show a composition bias toward basic residues; it reads AKNKGKKASS. A compositionally biased stretch (polar residues) spans 1413-1425; that stretch reads GSSSTPKASSTNA. The residue at position 1433 (serine 1433) is a Phosphoserine. Over residues 1473–1485 the composition is skewed to acidic residues; that stretch reads DNDEDVDDYDESD.

The protein belongs to the type II topoisomerase family. Homodimer. The cofactor is Mg(2+). It depends on Mn(2+) as a cofactor. Ca(2+) serves as cofactor. Phosphorylated at multiple sites at both extremities of the protein.

It localises to the nucleus. It carries out the reaction ATP-dependent breakage, passage and rejoining of double-stranded DNA.. In terms of biological role, control of topological states of DNA by transient breakage and subsequent rejoining of DNA strands. Topoisomerase II makes double-strand breaks. The sequence is that of DNA topoisomerase 2 (top2) from Schizosaccharomyces pombe (strain 972 / ATCC 24843) (Fission yeast).